Consider the following 91-residue polypeptide: Soluble cytochrome b558 (91 aa).

Residues 8–88 enclose the Cytochrome b5 heme-binding domain; it reads LPVFTLEQVA…LQRYLIGTLE (81 aa). A disulfide bridge links Cys-25 with Cys-54. The heme site is built by His-43 and His-71.

In Ectothiorhodospira shaposhnikovii (Ectothiorhodospira vacuolata), this protein is Soluble cytochrome b558.